The primary structure comprises 220 residues: UPF0758 protein APL_1970 (220 aa).

Positions asparagine 98 to arginine 220 constitute an MPN domain. Zn(2+)-binding residues include histidine 169, histidine 171, and aspartate 182. Residues histidine 169–aspartate 182 carry the JAMM motif motif.

It belongs to the UPF0758 family.

This is UPF0758 protein APL_1970 from Actinobacillus pleuropneumoniae serotype 5b (strain L20).